The primary structure comprises 311 residues: L-lactate dehydrogenase 2 (311 aa).

3 residues coordinate NAD(+): valine 14, aspartate 35, and arginine 40. Arginine 90 lines the substrate pocket. NAD(+)-binding positions include serine 103, 120-122 (ATN), and threonine 145. A substrate-binding site is contributed by 122-125 (NPCD). 150–153 (DTTR) contributes to the substrate binding site. Histidine 177 functions as the Proton acceptor in the catalytic mechanism. Residue threonine 230 coordinates substrate.

Belongs to the LDH/MDH superfamily. LDH family. Homotetramer.

The protein localises to the cytoplasm. The catalysed reaction is (S)-lactate + NAD(+) = pyruvate + NADH + H(+). It participates in fermentation; pyruvate fermentation to lactate; (S)-lactate from pyruvate: step 1/1. In terms of biological role, catalyzes the conversion of lactate to pyruvate. This is L-lactate dehydrogenase 2 from Listeria monocytogenes serotype 4b (strain F2365).